A 155-amino-acid polypeptide reads, in one-letter code: UPF0225 protein PC1_1977 (155 aa).

Belongs to the UPF0225 family.

In Pectobacterium carotovorum subsp. carotovorum (strain PC1), this protein is UPF0225 protein PC1_1977.